A 195-amino-acid chain; its full sequence is Inner membrane-spanning protein YciB (195 aa).

Transmembrane regions (helical) follow at residues 34-54, 65-85, 88-108, 131-151, and 160-180; these read IYGA…ALWL, FTLG…EDTF, WKAP…HFIG, LNIA…YVVF, and FKVF…GLFL.

Belongs to the YciB family.

It is found in the cell inner membrane. In terms of biological role, plays a role in cell envelope biogenesis, maintenance of cell envelope integrity and membrane homeostasis. The protein is Inner membrane-spanning protein YciB of Pseudomonas aeruginosa (strain LESB58).